The primary structure comprises 251 residues: uncharacterized protein (251 aa).

The protein to Anabaena PCC 7120 alr2406.

This is an uncharacterized protein from Synechocystis sp. (strain ATCC 27184 / PCC 6803 / Kazusa).